We begin with the raw amino-acid sequence, 347 residues long: MRIEEDLKLGFKDVLIRPKRSTLKSRSDVELERQFTFKHSDQSWSGVPIIAANMDTVGTFSMASALASFDILTAVHKHYSVEEWQAFINNSSADVLKHVMVSTGTSDADFEKTKQILDLNPALNFVCIDVANGYSEHVVQFVAKAREAWPTKTICAGNVVTGEMCEELILSGADIVKVGIGPGSVCTTRVKTGVGYPQLSAVIECADAAHGLGGMIVSDGGCTTPGDVAKAFGGGADFVMLGGMLAGHEESGGRIVEENGEKFMLFYGMSSESAMKRHVGGVAEYRAAEGKTVKLPLRGPVENTARDILGGLRSACTYVGASRLKELTKRTTFIRVQEQENRIFNNL.

108-131 (ADFEKTKQILDLNPALNFVCIDVA) contributes to the NADP(+) binding site. K(+) contacts are provided by Gly181 and Gly183. Residue Cys186 is the Thioimidate intermediate of the active site. 216 to 239 (IVSDGGCTTPGDVAKAFGGGADFV) provides a ligand contact to NADP(+).

It belongs to the IMPDH/GMPR family. GuaC type 1 subfamily. In terms of assembly, homotetramer.

The catalysed reaction is IMP + NH4(+) + NADP(+) = GMP + NADPH + 2 H(+). Catalyzes the irreversible NADPH-dependent deamination of GMP to IMP. It functions in the conversion of nucleobase, nucleoside and nucleotide derivatives of G to A nucleotides, and in maintaining the intracellular balance of A and G nucleotides. The polypeptide is GMP reductase (Shigella boydii serotype 18 (strain CDC 3083-94 / BS512)).